Consider the following 394-residue polypeptide: Seipin (394 aa).

Residues 1–27 (MVNDPPVPALLWAQEMGHVMAGRARKL) lie on the Cytoplasmic side of the membrane. The helical transmembrane segment at 28-48 (LLQFGVFFCTILLLLWVSVFL) threads the bilayer. The Lumenal segment spans residues 49-242 (YGSFYYSYMP…TCAFVGVASN (194 aa)). N-linked (GlcNAc...) asparagine glycans are attached at residues N88 and N242. The helical transmembrane segment at 243 to 263 (FTFLSVIVLFSYMQWVWGGIW) threads the bilayer. Residues 264–394 (PRQRLSLQVN…VRQRPICSSS (131 aa)) lie on the Cytoplasmic side of the membrane. The segment at 281–394 (RKDIQRKVSA…VRQRPICSSS (114 aa)) is disordered. A Phosphoserine modification is found at S289. Residues 292–303 (QPGPQGQEESPQ) show a composition bias toward low complexity. Phosphoserine occurs at positions 346 and 351.

It belongs to the seipin family. In terms of assembly, undecamer (an oligomer having eleven subunits). Oligomerization is important for its function in lipid droplet formation. Interacts with LDAF1 to form an oligomeric complex. Interacts with RAB18. Interacts with ZFYVE1 in a RAB18-dependent manner.

The protein resides in the endoplasmic reticulum membrane. The protein localises to the lipid droplet. Functionally, plays a crucial role in the formation of lipid droplets (LDs) which are storage organelles at the center of lipid and energy homeostasis. In association with LDAF1, defines the sites of LD formation in the ER. Also required for growth and maturation of small nascent LDs into larger mature LDs. Mediates the formation and/or stabilization of endoplasmic reticulum-lipid droplets (ER-LD) contacts, facilitating protein and lipid delivery from the ER into growing LDs. Regulates the maturation of ZFYVE1-positive nascent LDs and the function of the RAB18-ZFYVE1 complex in mediating the formation of ER-LD contacts. Binds anionic phospholipids including phosphatidic acid. Plays an important role in the differentiation and development of adipocytes. The protein is Seipin of Bos taurus (Bovine).